Reading from the N-terminus, the 420-residue chain is 2',3'-cyclic-nucleotide 3'-phosphodiesterase (420 aa).

Ser9 is modified (phosphoserine). At Tyr110 the chain carries Phosphotyrosine. 3 positions are modified to phosphoserine: Ser169, Ser227, and Ser239. The active-site Proton acceptor is the His250. Thr252 contributes to the substrate binding site. At Thr262 the chain carries Phosphothreonine. His329 serves as the catalytic Proton donor. Residue Thr331 participates in substrate binding. A Phosphoserine modification is found at Ser358. Residue Cys417 is modified to Cysteine methyl ester. A lipid anchor (S-farnesyl cysteine) is attached at Cys417. Positions 418–420 (TII) are cleaved as a propeptide — removed in mature form.

Belongs to the 2H phosphoesterase superfamily. CNPase family. Exists as monomers and homodimers.

It is found in the membrane. The protein resides in the melanosome. It catalyses the reaction a nucleoside 2',3'-cyclic phosphate + H2O = a nucleoside 2'-phosphate + H(+). Functionally, catalyzes the formation of 2'-nucleotide products from 2',3'-cyclic substrates. May participate in RNA metabolism in the myelinating cell, CNP is the third most abundant protein in central nervous system myelin. The protein is 2',3'-cyclic-nucleotide 3'-phosphodiesterase of Rattus norvegicus (Rat).